The sequence spans 396 residues: MSLYLKAEKIQSWRVLIMACAGFIFNTTEFVPVAMLSDIAQSFDMQTADTGLMMTVYAWTVLIMSLPAMLATGNMERKSLLIKLFIIFIVGHILSVIAWNFWILLLARMCIALAHSVFWSITASLVMRISPKHKKTQALGMLAIGTALATILGLPIGRIVGQLVGWRVTFGIIAVLALSIMFLIIRLLPNLPSKNAGSIASLPLLAKRPLLLWLYVTTAIVISAHFTAYTYIEPFMIDVGHLDPNFATAVLLVFGFSGIAASLLFNRLYRFAPTKFIVVSMSLLMFSLLLLLFSTKTIIAMFSLVFIWGIGISCIGLSLQMRVLKLAPDATDVATAIYSGIFNAGIGAGALFGNLATTYLGLNEIGYTGAALGLIGFIIFITTHLKYRHTFLLQNK.

Transmembrane regions (helical) follow at residues 15-35 (VLIM…PVAM), 51-71 (GLMM…AMLA), 84-104 (LFII…FWIL), 109-129 (MCIA…VMRI), 137-157 (QALG…LPIG), 168-188 (VTFG…IRLL), 209-229 (PLLL…FTAY), 245-265 (NFAT…SLLF), 273-293 (PTKF…LLLF), 297-317 (TIIA…CIGL), 333-353 (VATA…ALFG), and 365-385 (IGYT…TTHL).

It belongs to the major facilitator superfamily. SotB (TC 2.A.1.2) family.

It localises to the cell inner membrane. In terms of biological role, involved in the efflux of sugars. The physiological role may be the reduction of the intracellular concentration of toxic sugars or sugar metabolites. The protein is Probable sugar efflux transporter of Haemophilus influenzae (strain ATCC 51907 / DSM 11121 / KW20 / Rd).